A 263-amino-acid polypeptide reads, in one-letter code: MARGPKKHLKRLNAPKAWMLDKLGGVYAPRPSTGPHKLRECLPLVIFLRNRLKYALTGNEVLKIVKQRLIKVDGKVRTDPTYPAGFMDVVSIEKTNELFRLIYDVKGRFTVHRITPEEAKYKLCKVKRVSTGPKNVPFLVTHDGRTIRYPDPLIKVNDSVQLDIATSKIMDFIKFESGNLCMITGGRNLGRVGTIVSRERHPGSFDIVHIKDSTGHTFATRLNNVFIIGKGTKAYISLPRGKGVRLTIAEERDKRIAAKVAGQ.

Residues 42–104 (LPLVIFLRNR…TNELFRLIYD (63 aa)) enclose the S4 RNA-binding domain.

This sequence belongs to the eukaryotic ribosomal protein eS4 family.

This Spodoptera frugiperda (Fall armyworm) protein is Small ribosomal subunit protein eS4 (RpS4).